Here is a 133-residue protein sequence, read N- to C-terminus: Large ribosomal subunit protein bL20 (133 aa).

The protein belongs to the bacterial ribosomal protein bL20 family.

Functionally, binds directly to 23S ribosomal RNA and is necessary for the in vitro assembly process of the 50S ribosomal subunit. It is not involved in the protein synthesizing functions of that subunit. The polypeptide is Large ribosomal subunit protein bL20 (Bartonella quintana (strain Toulouse) (Rochalimaea quintana)).